Reading from the N-terminus, the 185-residue chain is Elongation factor P (185 aa).

This sequence belongs to the elongation factor P family.

The protein localises to the cytoplasm. It participates in protein biosynthesis; polypeptide chain elongation. Involved in peptide bond synthesis. Stimulates efficient translation and peptide-bond synthesis on native or reconstituted 70S ribosomes in vitro. Probably functions indirectly by altering the affinity of the ribosome for aminoacyl-tRNA, thus increasing their reactivity as acceptors for peptidyl transferase. The chain is Elongation factor P from Methylobacillus flagellatus (strain ATCC 51484 / DSM 6875 / VKM B-1610 / KT).